We begin with the raw amino-acid sequence, 168 residues long: Crossover junction endodeoxyribonuclease RuvC (168 aa).

Residues aspartate 7, glutamate 66, and aspartate 138 contribute to the active site. Mg(2+)-binding residues include aspartate 7, glutamate 66, and aspartate 138.

Belongs to the RuvC family. In terms of assembly, homodimer which binds Holliday junction (HJ) DNA. The HJ becomes 2-fold symmetrical on binding to RuvC with unstacked arms; it has a different conformation from HJ DNA in complex with RuvA. In the full resolvosome a probable DNA-RuvA(4)-RuvB(12)-RuvC(2) complex forms which resolves the HJ. The cofactor is Mg(2+).

Its subcellular location is the cytoplasm. It carries out the reaction Endonucleolytic cleavage at a junction such as a reciprocal single-stranded crossover between two homologous DNA duplexes (Holliday junction).. The RuvA-RuvB-RuvC complex processes Holliday junction (HJ) DNA during genetic recombination and DNA repair. Endonuclease that resolves HJ intermediates. Cleaves cruciform DNA by making single-stranded nicks across the HJ at symmetrical positions within the homologous arms, yielding a 5'-phosphate and a 3'-hydroxyl group; requires a central core of homology in the junction. The consensus cleavage sequence is 5'-(A/T)TT(C/G)-3'. Cleavage occurs on the 3'-side of the TT dinucleotide at the point of strand exchange. HJ branch migration catalyzed by RuvA-RuvB allows RuvC to scan DNA until it finds its consensus sequence, where it cleaves and resolves the cruciform DNA. The sequence is that of Crossover junction endodeoxyribonuclease RuvC from Cereibacter sphaeroides (strain ATCC 17029 / ATH 2.4.9) (Rhodobacter sphaeroides).